A 61-amino-acid chain; its full sequence is uncharacterized protein (61 aa).

This is an uncharacterized protein from Rickettsia conorii (strain ATCC VR-613 / Malish 7).